A 575-amino-acid polypeptide reads, in one-letter code: Methionine--tRNA ligase, mitochondrial (575 aa).

Residues 20-32 carry the 'HIGH' region motif; the sequence is PIFYPNAKPHLGH. A 'KMSKS' region motif is present at residues 341-345; the sequence is KMSKS. Residue K344 coordinates ATP.

It belongs to the class-I aminoacyl-tRNA synthetase family.

The protein localises to the mitochondrion matrix. The catalysed reaction is tRNA(Met) + L-methionine + ATP = L-methionyl-tRNA(Met) + AMP + diphosphate. Functionally, catalyzes the attachment of methionine to tRNA(Met) in the mitochondrion. The chain is Methionine--tRNA ligase, mitochondrial (MSM1) from Saccharomyces cerevisiae (strain ATCC 204508 / S288c) (Baker's yeast).